A 351-amino-acid chain; its full sequence is ATP-dependent 6-phosphofructokinase subunit gamma (351 aa).

Heterododecamer of 4 alpha, 4 beta and 4 gamma chains. The gamma chain bridges the N-terminal halves of the alpha and beta subunits.

Its subcellular location is the cytoplasm. It participates in carbohydrate degradation; glycolysis; D-glyceraldehyde 3-phosphate and glycerone phosphate from D-glucose: step 3/4. Structural subunit of pyrophosphate--fructose 6-phosphate 1-phosphotransferase. Not required for catalytic activity. Fine-tunes allosteric regulation of the ATP-PFK by ATP, fructose 2,6-bisphosphate and AMP. This is ATP-dependent 6-phosphofructokinase subunit gamma (PFK3) from Komagataella pastoris (Yeast).